A 70-amino-acid chain; its full sequence is Beta-insect excitatory toxin LqqIT1 (70 aa).

The LCN-type CS-alpha/beta domain occupies 2 to 65 (KNGYAVDSSG…ISDARKKYCD (64 aa)). 4 cysteine pairs are disulfide-bonded: Cys16-Cys37, Cys22-Cys42, Cys26-Cys44, and Cys38-Cys64.

Belongs to the long (4 C-C) scorpion toxin superfamily. Sodium channel inhibitor family. Beta subfamily. Expressed by the venom gland.

It is found in the secreted. In terms of biological role, excitatory insect beta-toxins induce a spastic paralysis. They bind voltage-independently at site-4 of sodium channels (Nav) and shift the voltage of activation toward more negative potentials thereby affecting sodium channel activation and promoting spontaneous and repetitive firing. In vivo, this toxin induces a fast excitatory contraction paralysis on fly larvae. It is active only on insects. The protein is Beta-insect excitatory toxin LqqIT1 of Leiurus quinquestriatus quinquestriatus (Egyptian scorpion).